Consider the following 215-residue polypeptide: MKKPALKYCGIRSLKDLQLAAESQADYLGFIFAESKRKVSPEDVKKWLNQVRVEKQVAGVFVNESIETMSRIAKSLKLDVIQLHGDEKPADAAALRKLTGCEIWKALHHQDNTTQEIARFKDNVDGFVIDSSVKGSRGGTGVAFSWECVPEYQQAAIGKRCFIAGGVNPDSITRLLKWQPEGIDLASGIEKNGQKDQNLMRLLEERMNRYVSISE.

Belongs to the TrpF family.

It catalyses the reaction N-(5-phospho-beta-D-ribosyl)anthranilate = 1-(2-carboxyphenylamino)-1-deoxy-D-ribulose 5-phosphate. Its pathway is amino-acid biosynthesis; L-tryptophan biosynthesis; L-tryptophan from chorismate: step 3/5. This is N-(5'-phosphoribosyl)anthranilate isomerase (trpF) from Bacillus subtilis (strain 168).